Reading from the N-terminus, the 362-residue chain is UDP-3-O-acylglucosamine N-acyltransferase (362 aa).

The Proton acceptor role is filled by His251.

The protein belongs to the transferase hexapeptide repeat family. LpxD subfamily. As to quaternary structure, homotrimer.

The enzyme catalyses a UDP-3-O-[(3R)-3-hydroxyacyl]-alpha-D-glucosamine + a (3R)-hydroxyacyl-[ACP] = a UDP-2-N,3-O-bis[(3R)-3-hydroxyacyl]-alpha-D-glucosamine + holo-[ACP] + H(+). Its pathway is bacterial outer membrane biogenesis; LPS lipid A biosynthesis. Catalyzes the N-acylation of UDP-3-O-acylglucosamine using 3-hydroxyacyl-ACP as the acyl donor. Is involved in the biosynthesis of lipid A, a phosphorylated glycolipid that anchors the lipopolysaccharide to the outer membrane of the cell. The sequence is that of UDP-3-O-acylglucosamine N-acyltransferase from Cupriavidus pinatubonensis (strain JMP 134 / LMG 1197) (Cupriavidus necator (strain JMP 134)).